The following is a 390-amino-acid chain: MSIDTARSGSDDDVEIREIQAAAAPTRFARGWHCLGLLRDFQDGKPHSIEAFGTKLVVFADSKGQLNVLDAYCRHMGGDLSRGEVKGDSIACPFHDWRWNGKGKCTDIPYARRVPPIAKTRAWTTLERNGQLYVWNDPQGNPPPEDVTIPEIAGYGTDEWTDWSWKSLRIKGSHCREIVDNVVDMAHFFYIHYSFPRYFKNVFEGHTATQYMHSTGREDVISGTNYDDPNAELRSEATYFGPSYMIDWLESDANGQTIETILINCHYPVSNNEFVLQYGAIVKKLPGVSDEIAAGMAEQFAEGVQLGFEQDVEIWKNKAPIDNPLLSEEDGPVYQLRRWYQQFYVDVEDITEDMTKRFEFEIDTTRAVASWQKEVAENLAKQAEGSTATP.

Residues 32 to 134 (WHCLGLLRDF…TLERNGQLYV (103 aa)) form the Rieske domain. Cysteine 73, histidine 75, cysteine 92, and histidine 95 together coordinate [2Fe-2S] cluster. Asparagine 181, histidine 187, histidine 192, and aspartate 311 together coordinate Fe cation.

Homotrimer. The two-component system 3-ketosteroid-9-alpha-monooxygenase is composed of an oxygenase component KshA and a reductase component KshB. [2Fe-2S] cluster serves as cofactor. Requires Fe cation as cofactor.

It catalyses the reaction androsta-1,4-diene-3,17-dione + 2 reduced [2Fe-2S]-[ferredoxin] + O2 + 2 H(+) = 9alpha-hydroxyandrosta-1,4-diene-3,17-dione + 2 oxidized [2Fe-2S]-[ferredoxin] + H2O. The protein operates within steroid metabolism; cholesterol degradation. In terms of biological role, probably involved in the degradation of cholesterol. In vitro, catalyzes the introduction of a 9alpha-hydroxyl moiety into the ring B of 3-ketosteroid substrates such as 1,4-androstadiene-3,17-dione (ADD), 4-androstene-3,17-dione (AD), 4-androstene-17beta-ol-3-one (testosterone), 4-pregnene-3,20-dione (progesterone), 19-nor-4-androstene-3,17-dione, 1-(5alpha)-androstene-3,17-dione, 5alpha-androstane-3,17-dione, 5beta-androstane-3,17-dione, 5alpha-androstane-17beta-ol-3-one (stanolon), 11beta-hydrocortisone, 3-oxo-23,24-bisnorcholesta-4-en-22-oate (4-BNC), 23,24-bisnorcholesta-4-ene-22-oate, 3-oxo-23,24-bisnorcholesta-1,4-dien-22-oate (1,4-BNC) and 3-oxo-23,24-bisnorcholesta-1,4-dien-22-oyl-coenzyme A thioester (1,4-BNC-CoA). KshA5 has the broadest substrate range without a clear substrate preference and is active with Delta-4, Delta-1,4, 5alpha-H and 5beta-H steroids, as well as with steroids having bulky aliphatic side chains and an isopropionyl side chain at C17. The polypeptide is 3-ketosteroid-9-alpha-monooxygenase, oxygenase component (Rhodococcus rhodochrous).